We begin with the raw amino-acid sequence, 193 residues long: NADH-quinone oxidoreductase subunit B (193 aa).

The [4Fe-4S] cluster site is built by Cys72, Cys73, Cys137, and Cys167.

This sequence belongs to the complex I 20 kDa subunit family. As to quaternary structure, NDH-1 is composed of 14 different subunits. Subunits NuoB, C, D, E, F, and G constitute the peripheral sector of the complex. [4Fe-4S] cluster serves as cofactor.

The protein resides in the cell inner membrane. The enzyme catalyses a quinone + NADH + 5 H(+)(in) = a quinol + NAD(+) + 4 H(+)(out). Its function is as follows. NDH-1 shuttles electrons from NADH, via FMN and iron-sulfur (Fe-S) centers, to quinones in the respiratory chain. The immediate electron acceptor for the enzyme in this species is believed to be ubiquinone. Couples the redox reaction to proton translocation (for every two electrons transferred, four hydrogen ions are translocated across the cytoplasmic membrane), and thus conserves the redox energy in a proton gradient. The chain is NADH-quinone oxidoreductase subunit B from Caulobacter vibrioides (strain ATCC 19089 / CIP 103742 / CB 15) (Caulobacter crescentus).